The following is a 457-amino-acid chain: Secreted RxLR effector protein 8 (457 aa).

An N-terminal signal peptide occupies residues 1–19 (MRGTLATALLLVISSRVAT). A RxLR-dEER motif is present at residues 48–69 (RFLRGSRKQRDDLAPTAADENR). Asparagine 68 carries N-linked (GlcNAc...) asparagine glycosylation. Disordered stretches follow at residues 110–188 (RLSL…ALKS) and 398–457 (RQTI…RSSS). Residues 135-152 (SASTSTTSDIATSSSRTS) are compositionally biased toward low complexity. Composition is skewed to polar residues over residues 153-163 (NQRTPKTQASL) and 176-187 (SKNQFKKSTALK). A compositionally biased stretch (basic residues) spans 442 to 457 (IKSKDHARKKRPRSSS).

This sequence belongs to the RxLR effector family.

The protein localises to the secreted. The protein resides in the host nucleus. Functionally, secreted effector that completely suppresses the host cell death induced by cell death-inducing proteins. The chain is Secreted RxLR effector protein 8 from Plasmopara viticola (Downy mildew of grapevine).